A 145-amino-acid polypeptide reads, in one-letter code: Ribonuclease H (145 aa).

Positions 1–141 (MQEVIIYSDG…ADALANRGVA (141 aa)) constitute an RNase H type-1 domain. Residues aspartate 9, glutamate 47, aspartate 69, and aspartate 133 each coordinate Mg(2+).

This sequence belongs to the RNase H family. In terms of assembly, monomer. It depends on Mg(2+) as a cofactor.

The protein resides in the cytoplasm. The catalysed reaction is Endonucleolytic cleavage to 5'-phosphomonoester.. In terms of biological role, endonuclease that specifically degrades the RNA of RNA-DNA hybrids. This is Ribonuclease H from Cupriavidus pinatubonensis (strain JMP 134 / LMG 1197) (Cupriavidus necator (strain JMP 134)).